The primary structure comprises 469 residues: Cytosolic Fe-S cluster assembly factor NAR1 (469 aa).

[4Fe-4S] cluster is bound by residues C20, C56, C59, C62, C168, C215, C394, and C398.

It belongs to the NARF family.

In terms of biological role, component of the cytosolic Fe/S protein assembly machinery. Required for maturation of extramitochondrial Fe/S proteins. May play a role in the transfer of pre-assembled Fe/S clusters to target apoproteins. The sequence is that of Cytosolic Fe-S cluster assembly factor NAR1 (NAR1) from Kluyveromyces lactis (strain ATCC 8585 / CBS 2359 / DSM 70799 / NBRC 1267 / NRRL Y-1140 / WM37) (Yeast).